We begin with the raw amino-acid sequence, 492 residues long: MEYHMEYSPNEVIKQEREVFVGKEKSGSKFKRKRSIFIVLTVSICFMFALMLFYFTRNENNKTLFTNSLSNNINDDYIINSLLKSESGKKFIVSKLEELISSYDKEKKMRTTGAEENNMNMNGIDDKDNKSVSFVNKKNGNLKVNNNNQVSYSNLFDTKFLMDNLETVNLFYIFLKENNKKYETSEEMQKRFIIFSENYRKIELHNKKTNSLYKRGMNKFGDLSPEEFRSKYLNLKTHGPFKTLSPPVSYEANYEDVIKKYKPADAKLDRIAYDWRLHGGVTPVKDQALCGSCWAFSSVGSVESQYAIRKKALFLFSEQELVDCSVKNNGCYGGYITNAFDDMIDLGGLCSQDDYPYVSNLPETCNLKRCNERYTIKSYVSIPDDKFKEALRYLGPISISIAASDDFAFYRGGFYDGECGAAPNHAVILVGYGMKDIYNEDTGRMEKFYYYIIKNSWGSDWGEGGYINLETDENGYKKTCSIGTEAYVPLLE.

At 1 to 35 (MEYHMEYSPNEVIKQEREVFVGKEKSGSKFKRKRS) the chain is on the cytoplasmic side. A propeptide spans 1 to 242 (MEYHMEYSPN…LNLKTHGPFK (242 aa)) (activation peptide). The short motif at 16 to 25 (EREVFVGKEK) is the Bipartite vacuolar targeting signal 1 element. The chain crosses the membrane as a helical; Signal-anchor for type II membrane protein span at residues 36–56 (IFIVLTVSICFMFALMLFYFT). Over 57–492 (RNENNKTLFT…GTEAYVPLLE (436 aa)) the chain is Lumenal. A glycan (N-linked (GlcNAc...) asparagine) is linked at asparagine 61. A Bipartite vacuolar targeting signal 2 motif is present at residues 84-105 (KSESGKKFIVSKLEELISSYDK). Asparagine 129 is a glycosylation site (N-linked (GlcNAc...) asparagine). Positions 251–268 (EANYEDVIKKYKPADAKL) match the Nose motif; required for the correct folding of the mature form motif. Intrachain disulfides connect cysteine 290–cysteine 331, cysteine 324–cysteine 365, cysteine 350–cysteine 370, and cysteine 419–cysteine 480. Cysteine 293 is a catalytic residue. The active site involves histidine 425. Positions 436-445 (DIYNEDTGRM) match the Arm motif; binds to host hemoglobin and required for the inhibitory interaction between the propeptide and the catalytic domain motif. The active site involves asparagine 455.

This sequence belongs to the peptidase C1 family. Post-translationally, auto-cleavage occurs at acidic pH. The proenzyme is the predominant form in late trophozoites and both the pro and mature enzyme are present in schizonts.

It is found in the membrane. The protein resides in the vacuole. Its subcellular location is the cytoplasmic vesicle membrane. Its activity is regulated as follows. Inhibited by cysteine protease inhibitor ICP. Its function is as follows. Cysteine protease which cleaves native host hemoglobin and globin in the food vacuole during the asexual blood stage. Preferentially cleaves substrates which have an arginine at the P1 position and a leucine at the P2 position. This Plasmodium falciparum (isolate 3D7) protein is Falcipain-3.